Here is a 135-residue protein sequence, read N- to C-terminus: MNIKNQKPKGKMVLRTLAMPADTNANGDIFGGWIMSQMDIGGAILAKEIARGRVVTVSVNGMTFLKSVSVGDVVSCYAHCIRTGNTSITIKIEVWIKKVSSEPLGKFYCTTEAIFVYVAVDEFGQPKTLLPFSII.

Residues 8–123 (PKGKMVLRTL…IFVYVAVDEF (116 aa)) enclose the HotDog ACOT-type domain.

It belongs to the acyl coenzyme A hydrolase family.

This is an uncharacterized protein from Buchnera aphidicola subsp. Baizongia pistaciae (strain Bp).